We begin with the raw amino-acid sequence, 499 residues long: Argininosuccinate lyase (499 aa).

The segment at 1 to 22 (MSDGEDHETANADDRDETVVRR) is disordered. The span at 7–22 (HETANADDRDETVVRR) shows a compositional bias: basic and acidic residues.

This sequence belongs to the lyase 1 family. Argininosuccinate lyase subfamily.

Its subcellular location is the cytoplasm. It catalyses the reaction 2-(N(omega)-L-arginino)succinate = fumarate + L-arginine. Its pathway is amino-acid biosynthesis; L-arginine biosynthesis; L-arginine from L-ornithine and carbamoyl phosphate: step 3/3. In Haloarcula marismortui (strain ATCC 43049 / DSM 3752 / JCM 8966 / VKM B-1809) (Halobacterium marismortui), this protein is Argininosuccinate lyase.